A 492-amino-acid polypeptide reads, in one-letter code: Phosphatidylinositol 4-kinase type 2-beta (492 aa).

Basic and acidic residues predominate over residues 1 to 11 (MEPKQTADARD). Residues 1 to 98 (MEPKQTADAR…SDRENMSGGH (98 aa)) are disordered. The PI3K/PI4K catalytic domain maps to 127 to 462 (GVFPERISQG…VQMPRVVVER (336 aa)). The interval 133–139 (ISQGSSG) is G-loop. ATP-binding residues include Ser140 and Lys155. The tract at residues 160–162 (EPY) is important for substrate binding. Residues 168 to 181 (KWTKYFHKICCPCC) form an important for interaction with membranes region. ATP is bound by residues 264–267 (QLFV) and 278–279 (RK). An important for interaction with membranes region spans residues 271 to 279 (KEADYWLRK). The tract at residues 308-316 (RNTDRGNDN) is catalytic loop. The segment at 353–373 (AIDNGLAFPFKHPDEWRAYPF) is activation loop. Asp355 serves as a coordination point for ATP. The important for interaction with membranes stretch occupies residues 368 to 377 (WRAYPFHWAW).

This sequence belongs to the PI3/PI4-kinase family. Type II PI4K subfamily.

The protein resides in the cytoplasm. The protein localises to the cytosol. It is found in the golgi apparatus membrane. It localises to the endoplasmic reticulum membrane. Its subcellular location is the cell membrane. The protein resides in the early endosome membrane. It catalyses the reaction a 1,2-diacyl-sn-glycero-3-phospho-(1D-myo-inositol) + ATP = a 1,2-diacyl-sn-glycero-3-phospho-(1D-myo-inositol 4-phosphate) + ADP + H(+). Contributes to the overall PI4-kinase activity of the cell. This contribution may be especially significant in plasma membrane, endosomal and Golgi compartments. The phosphorylation of phosphatidylinositol (PI) to PI4P is the first committed step in the generation of phosphatidylinositol 4,5-bisphosphate (PIP2), a precursor of the second messenger inositol 1,4,5-trisphosphate (InsP3). In Xenopus tropicalis (Western clawed frog), this protein is Phosphatidylinositol 4-kinase type 2-beta (pi4k2b).